Consider the following 637-residue polypeptide: MGLLSQGSPLSWEETQRHADHVRRHGILQFLHIYHAVKDRHKDVLKWGDEVEYMLVSFDHENRKVQLLLNGGDVLETLQEKGERTNPNHPTLWRPEYGSYMIEGTPGQPYGGTMSEFNTVEDNMRKRRKEATSVLGEHQALCTITSFPRLGCPGFTLPEHRPNPEEGGASKSLFFPDEAINKHPRFGTLTRNIRHRRGEKVVINVPIFKDKNTPSPFVETFPEDEEASKASKPDHIYMDAMGFGMGNCCLQVTFQACSISEARYLYDQLATICPIVMALSAASPFYRGYVSDIDCRWGVISASVDDRTREERGLEPLKNNRFKISKSRYDSIDSYLSKCGEKYNDIDLTIDTEIYEQLLEEGIDHLLAQHVAHLFIRDPLTLFEEKIHLDDANESDHFENIQSTNWQTMRFKPPPPNSDIGWRVEFRPMEVQLTDFENSAYVVFVVLLTRVILSYKLDFLIPLSKVDENMKVAQERDAVLQGMFYFRKDICKGGNAVVDGCSKAQTSSEPSAEEYTLMSIDTIINGKEGVFPGLIPILNSYLENMEVDVDTRCSILNYLKLIKKRASGELMTVARWMREFIANHPDYKQDSVITDEINYSLILKCNQIANELCECPELLGSGFRKAKYSGGKSDPSD.

An N-acetylmethionine modification is found at Met-1. Residues Ser-5 and Ser-8 each carry the phosphoserine modification.

The protein belongs to the glutamate--cysteine ligase type 3 family. Heterodimer of a catalytic heavy chain and a regulatory light chain. In terms of tissue distribution, most abundant in kidney. Also found in liver and testis.

The catalysed reaction is L-cysteine + L-glutamate + ATP = gamma-L-glutamyl-L-cysteine + ADP + phosphate + H(+). It catalyses the reaction (2S)-2-aminobutanoate + L-glutamate + ATP = gamma-L-glutamyl-(2S)-2-aminobutanoate + ADP + phosphate + H(+). Its pathway is sulfur metabolism; glutathione biosynthesis; glutathione from L-cysteine and L-glutamate: step 1/2. Its activity is regulated as follows. Feedback inhibition by glutathione. Its function is as follows. Catalyzes the ATP-dependent ligation of L-glutamate and L-cysteine and participates in the first and rate-limiting step in glutathione biosynthesis. In Rattus norvegicus (Rat), this protein is Glutamate--cysteine ligase catalytic subunit.